The sequence spans 510 residues: MHFSSLSLPLTALSLVTPSLAYPQFKFEQRVARSNSSESRANAVKEAFVHAWDGYMQYAYPHDELHPISNGVGDSRNGWGASAVDALSTAVIMGNETIVNQILDHIATIDYSKTDDQVSLFETTIRYLGGMLSGYDLLKGPASNLVKDQAKVKTLLDQSQNLADVLKFAFDTPSGIPYNNINITSHGNDGATTNGLAVTGTLVLEWTRLSDLTGDTEYAQLSQKAEDYLLNPSPKSAEPFEGLVGSHINISNGAFADGQVSWNGGDDSFYEYLIKMYVYDPKRFSTYGDRWVKAAESSIKHLASHPEKRPDLTFLASYNDGQYGLSSQHLTCFDGGSFLLGGTVLDRDDFIQFGLDLVKGCHETYNQTLTGIGPESFGWDPKNVPSDQKELYERAGFYISSGAYILRPEVIESFYYAWRITGQEIYREWVWNAFVNINKYCRTDSGFAGLTNVNAANGGGRYDNQESFLFAEVLKYVYLTFAPDNEWQVQRGKGNKFVYNTEAHPVRVAA.

An N-terminal signal peptide occupies residues 1–21; it reads MHFSSLSLPLTALSLVTPSLA. Residues Asn-35, Asn-95, Asn-182, and Asn-249 are each glycosylated (N-linked (GlcNAc...) asparagine). An intrachain disulfide couples Cys-332 to Cys-361. An N-linked (GlcNAc...) asparagine glycan is attached at Asn-366. Glu-375 serves as the catalytic Proton donor. Residue Thr-501 participates in Ca(2+) binding.

Belongs to the glycosyl hydrolase 47 family. As to quaternary structure, monomer. Ca(2+) is required as a cofactor. The cofactor is Mg(2+).

The protein localises to the cytoplasmic vesicle lumen. It carries out the reaction N(4)-(alpha-D-Man-(1-&gt;2)-alpha-D-Man-(1-&gt;2)-alpha-D-Man-(1-&gt;3)-[alpha-D-Man-(1-&gt;2)-alpha-D-Man-(1-&gt;3)-[alpha-D-Man-(1-&gt;2)-alpha-D-Man-(1-&gt;6)]-alpha-D-Man-(1-&gt;6)]-beta-D-Man-(1-&gt;4)-beta-D-GlcNAc-(1-&gt;4)-beta-D-GlcNAc)-L-asparaginyl-[protein] (N-glucan mannose isomer 9A1,2,3B1,2,3) + 4 H2O = N(4)-(alpha-D-Man-(1-&gt;3)-[alpha-D-Man-(1-&gt;3)-[alpha-D-Man-(1-&gt;6)]-alpha-D-Man-(1-&gt;6)]-beta-D-Man-(1-&gt;4)-beta-D-GlcNAc-(1-&gt;4)-beta-D-GlcNAc)-L-asparaginyl-[protein] (N-glucan mannose isomer 5A1,2) + 4 beta-D-mannose. The catalysed reaction is N(4)-(alpha-D-Man-(1-&gt;2)-alpha-D-Man-(1-&gt;2)-alpha-D-Man-(1-&gt;3)-[alpha-D-Man-(1-&gt;3)-[alpha-D-Man-(1-&gt;2)-alpha-D-Man-(1-&gt;6)]-alpha-D-Man-(1-&gt;6)]-beta-D-Man-(1-&gt;4)-beta-D-GlcNAc-(1-&gt;4)-beta-D-GlcNAc)-L-asparaginyl-[protein] (N-glucan mannose isomer 8A1,2,3B1,3) + 3 H2O = N(4)-(alpha-D-Man-(1-&gt;3)-[alpha-D-Man-(1-&gt;3)-[alpha-D-Man-(1-&gt;6)]-alpha-D-Man-(1-&gt;6)]-beta-D-Man-(1-&gt;4)-beta-D-GlcNAc-(1-&gt;4)-beta-D-GlcNAc)-L-asparaginyl-[protein] (N-glucan mannose isomer 5A1,2) + 3 beta-D-mannose. It participates in protein modification; protein glycosylation. Involved in the maturation of Asn-linked oligosaccharides. Progressively trims alpha-1,2-linked mannose residues from Man(9)GlcNAc(2) to produce Man(5)GlcNAc(2). This Aspergillus flavus (strain ATCC 200026 / FGSC A1120 / IAM 13836 / NRRL 3357 / JCM 12722 / SRRC 167) protein is Probable mannosyl-oligosaccharide alpha-1,2-mannosidase 1B (mns1B).